We begin with the raw amino-acid sequence, 257 residues long: Probable enoyl-CoA hydratase echA8 (257 aa).

Belongs to the enoyl-CoA hydratase/isomerase family.

The catalysed reaction is a (3S)-3-hydroxyacyl-CoA = a (2E)-enoyl-CoA + H2O. The enzyme catalyses a 4-saturated-(3S)-3-hydroxyacyl-CoA = a (3E)-enoyl-CoA + H2O. Functionally, could possibly oxidize fatty acids using specific components. This is Probable enoyl-CoA hydratase echA8 (echA8) from Mycobacterium leprae (strain TN).